Consider the following 327-residue polypeptide: GMP reductase (327 aa).

Cys-176 acts as the Thioimidate intermediate in catalysis. 205–228 is an NADP(+) binding site; the sequence is IIADGGIRTHGDIAKSIRFGASMV.

Belongs to the IMPDH/GMPR family. GuaC type 2 subfamily.

It carries out the reaction IMP + NH4(+) + NADP(+) = GMP + NADPH + 2 H(+). In terms of biological role, catalyzes the irreversible NADPH-dependent deamination of GMP to IMP. It functions in the conversion of nucleobase, nucleoside and nucleotide derivatives of G to A nucleotides, and in maintaining the intracellular balance of A and G nucleotides. This Streptococcus agalactiae serotype V (strain ATCC BAA-611 / 2603 V/R) protein is GMP reductase.